Reading from the N-terminus, the 461-residue chain is Probable tubulin polyglutamylase TTLL9 (461 aa).

Over residues 1-10 (MSRQKNQNSK) the composition is skewed to polar residues. The tract at residues 1 to 20 (MSRQKNQNSKGHGVSKGKER) is disordered. Positions 22–402 (QRTLIRFKTT…EARLTGKEKR (381 aa)) constitute a TTL domain. Residues Lys149 and 155 to 156 (QG) contribute to the ATP site. Gln155 lines the a protein pocket. The interval 172 to 208 (RKGTSGKKPTGVETQPARANMNPSGSHDTRSSDDQKD) is disordered. Residues 198–208 (HDTRSSDDQKD) are compositionally biased toward basic and acidic residues. ATP contacts are provided by residues 218 to 221 (QRYV) and 231 to 233 (KFD). Arg257 contributes to the L-glutamate binding site. Residue 276–277 (TN) coordinates ATP. Lys294 is an L-glutamate binding site. Mg(2+)-binding residues include Asp348, Glu361, and Asn363. Residue Lys379 coordinates L-glutamate.

Belongs to the tubulin--tyrosine ligase family. Mg(2+) is required as a cofactor. In terms of tissue distribution, highly expressed in brain and testis. Expressed in heart, kidney and lung. In the brain, expressed in ependymal cilia, cortex, corpus callosum and striatum. In the testis, specifically expressed in the seminiferous tubules.

The protein resides in the cytoplasm. It localises to the cytoskeleton. Its subcellular location is the cilium basal body. The protein localises to the flagellum axoneme. It carries out the reaction (L-glutamyl)(n)-gamma-L-glutamyl-L-glutamyl-[protein] + L-glutamate + ATP = (L-glutamyl)(n+1)-gamma-L-glutamyl-L-glutamyl-[protein] + ADP + phosphate + H(+). In terms of biological role, probable tubulin polyglutamylase that generates side chains of glutamate on the gamma-carboxyl group of specific glutamate residues within the C-terminal tail of target proteins. Similar to TTLL1, may acquire enzymatic activity only in complex with other proteins as it is most likely lacking domains important for autonomous activity. Mediates tubulin polyglutamylation which induces establishment of microtubule heterogeneity in sperm flagella, thereby playing a role in normal motile flagella axoneme structure and sperm flagella beating pattern. This Mus musculus (Mouse) protein is Probable tubulin polyglutamylase TTLL9.